The sequence spans 1022 residues: Translation initiation factor IF-2 (1022 aa).

Over residues 82–94 the composition is skewed to basic and acidic residues; sequence EQSRKTLEKEQHL. Disordered stretches follow at residues 82 to 129 and 342 to 436; these read EQSR…AVPA and SENK…QREL. Positions 104–115 are enriched in low complexity; the sequence is ASKSSAKGSESA. A compositionally biased stretch (basic residues) spans 375-384; that stretch reads KAKKGKKKKK. Residues 421-436 are compositionally biased toward basic and acidic residues; that stretch reads SEREREQEEGAAQREL. The region spanning 519 to 689 is the tr-type G domain; the sequence is TRPPVVTIMG…LTEAELRELK (171 aa). A G1 region spans residues 528–535; the sequence is GHVDHGKT. Residue 528–535 coordinates GTP; the sequence is GHVDHGKT. Residues 553–557 are G2; sequence GITQH. The interval 575–578 is G3; sequence DTPG. Residues 575–579 and 629–632 each bind GTP; these read DTPGH and NKID. Residues 629-632 are G4; sequence NKID. Residues 665–667 form a G5 region; sequence SAK.

The protein belongs to the TRAFAC class translation factor GTPase superfamily. Classic translation factor GTPase family. IF-2 subfamily.

The protein localises to the cytoplasm. Its function is as follows. One of the essential components for the initiation of protein synthesis. Protects formylmethionyl-tRNA from spontaneous hydrolysis and promotes its binding to the 30S ribosomal subunits. Also involved in the hydrolysis of GTP during the formation of the 70S ribosomal complex. In Chlorobium chlorochromatii (strain CaD3), this protein is Translation initiation factor IF-2.